Reading from the N-terminus, the 593-residue chain is Myc box-dependent-interacting protein 1 (593 aa).

Position 2 is an N-acetylalanine (A2). The segment at 2-122 (AEMGSKGVTA…DYHQKLVDQA (121 aa)) is interaction with BIN2. Coiled coils occupy residues 15–42 (ASNV…TKDE) and 193–267 (HLVA…NDVL). Positions 29–276 (VLQKLGKADE…LVGLEKQHGS (248 aa)) constitute a BAR domain. Disordered regions lie at residues 280-354 (TVKA…KEVK) and 400-488 (PVTS…AASS). S296, S298, and S303 each carry phosphoserine. Phosphothreonine occurs at positions 307 and 323. S331 is subject to Phosphoserine. Positions 378–421 (FEAPGPFSEQASLLDLDFDPLPPVTSPVKAPTPSGQSIPWDLWE) are clathrin-binding. Positions 520–593 (GFMFKVQAQH…FPENFTERVP (74 aa)) constitute an SH3 domain.

As to quaternary structure, heterodimer with AMPH. Binds SH3GLB1. Interacts (via SH3 domain) with DNM1. Interacts with SYNJ1. Interacts (via SH3 domain) with DNM2. Isoform IIA interacts with CLTC. Isoform IIB does not interact with CLTC. Isoform IIC1 does not interact with CLTC. Isoform IIC2 does not interact with CLTC. Interacts with AP2A2. Interacts with AP2B1. Interacts with MYC (via N-terminal transactivation domain); the interaction requires the integrity of the conserved MYC box regions 1 and 2. Interacts with BIN2. Interacts with SNX4. Interacts (via BAR domain) with BACE1. Binds (via BAR domain) F-actin. In terms of assembly, (Microbial infection) Interacts (SH3 domain) with HCV NS5A. Post-translationally, phosphorylated by protein kinase C. Ubiquitous. Highest expression in the brain and muscle. Expressed in oligodendrocytes. Isoform IIA is expressed only in the brain, where it is detected in the gray matter, but not in the white matter. Isoform BIN1 is widely expressed with highest expression in skeletal muscle.

Its subcellular location is the nucleus. It localises to the cytoplasm. The protein resides in the endosome. It is found in the cell membrane. The protein localises to the sarcolemma. Its subcellular location is the T-tubule. Functionally, is a key player in the control of plasma membrane curvature, membrane shaping and membrane remodeling. Required in muscle cells for the formation of T-tubules, tubular invaginations of the plasma membrane that function in depolarization-contraction coupling. Is a negative regulator of endocytosis. Is also involved in the regulation of intracellular vesicles sorting, modulation of BACE1 trafficking and the control of amyloid-beta production. In neuronal circuits, endocytosis regulation may influence the internalization of PHF-tau aggregates. May be involved in the regulation of MYC activity and the control cell proliferation. Has actin bundling activity and stabilizes actin filaments against depolymerization in vitro. In Homo sapiens (Human), this protein is Myc box-dependent-interacting protein 1 (BIN1).